Here is an 859-residue protein sequence, read N- to C-terminus: Transforming growth factor-beta receptor-associated protein 1 (859 aa).

Positions 24–297 (RGLLECVECC…HILQDFEGRV (274 aa)) constitute a CNH domain. A CHCR repeat occupies 563-727 (KRPLDEQQSG…LLAVYLGPGP (165 aa)).

Belongs to the TRAP1 family. As to quaternary structure, interacts with TGFBR2 and ACVR2B; in the absence of ligand stimulation. Interacts with TGFBR1, ACVRL1, BMPR1A and ACVR1B; in the absence of ligand stimulation and to a less extent. Interacts with SMAD4; the interaction seems to be mutually exclusive with the interaction of SMAD4 and phosphorylated SMAD2. May interact with ALOX5. Interacts with RAB5C. Interacts with VPS8, VPS11 and VPS16. Component of the putative class C core vacuole/endosome tethering (CORVET) complex; the core of which composed of the class C Vps proteins VPS11, VPS16, VPS18 and VPS33A, is associated with VPS8 and TGFBRAP1.

It is found in the cytoplasm. It localises to the early endosome. In terms of biological role, plays a role in the TGF-beta/activin signaling pathway. It associates with inactive heteromeric TGF-beta and activin receptor complexes, mainly through the type II receptor, and is released upon activation of signaling. May recruit SMAD4 to the vicinity of the receptor complex and facilitate its interaction with receptor-regulated Smads, such as SMAD2. Plays a role in vesicle-mediated protein trafficking of the endocytic membrane transport pathway. Believed to act as a component of the putative CORVET endosomal tethering complexes which is proposed to be involved in the Rab5-to-Rab7 endosome conversion probably implicating MON1A/B, and via binding SNAREs and SNARE complexes to mediate tethering and docking events during SNARE-mediated membrane fusion. The CORVET complex is proposed to function as a Rab5 effector to mediate early endosome fusion probably in specific endosome subpopulations. Functions predominantly in APPL1-containing endosomes and in degradative but not recycling trafficking of endocytosed cargo. In Bos taurus (Bovine), this protein is Transforming growth factor-beta receptor-associated protein 1 (TGFBRAP1).